The chain runs to 96 residues: Large ribosomal subunit protein bL28 (96 aa).

This sequence belongs to the bacterial ribosomal protein bL28 family.

The polypeptide is Large ribosomal subunit protein bL28 (Agrobacterium fabrum (strain C58 / ATCC 33970) (Agrobacterium tumefaciens (strain C58))).